The sequence spans 570 residues: Cytoplasmic polyadenylation element-binding protein 2 (570 aa).

The RRM domain occupies 434–516 (LVAFIGGVPR…KRVEIKPYFF (83 aa)).

In terms of tissue distribution, expressed specifically in the spermatogenic germ line.

Functionally, cytoplasmic polyadenylation element binding protein that binds to and regulates the translation of specific mRNAs. Not required for oogenesis. This Caenorhabditis elegans protein is Cytoplasmic polyadenylation element-binding protein 2 (cpb-2).